Here is a 437-residue protein sequence, read N- to C-terminus: Type II methyltransferase M.HgiCII (437 aa).

In terms of domain architecture, SAM-dependent MTase C5-type spans 4–431; it reads FRFIDLFAGI…KALPNDHLFE (428 aa). Cys75 is an active-site residue.

Belongs to the class I-like SAM-binding methyltransferase superfamily. C5-methyltransferase family.

It catalyses the reaction a 2'-deoxycytidine in DNA + S-adenosyl-L-methionine = a 5-methyl-2'-deoxycytidine in DNA + S-adenosyl-L-homocysteine + H(+). Functionally, a methylase that recognizes the double-stranded sequence 5'-GGWCC-3', methylates C-? on both strands and protects the DNA from cleavage by the HgiCII endonuclease. The protein is Type II methyltransferase M.HgiCII of Herpetosiphon aurantiacus (Herpetosiphon giganteus).